The primary structure comprises 212 residues: Octanoyltransferase (212 aa).

Positions 31-209 (AETQDEIWLV…HFADLLGYNI (179 aa)) constitute a BPL/LPL catalytic domain. Substrate-binding positions include 70-77 (RGGQITYH), 138-140 (SLG), and 151-153 (GLA). Residue cysteine 169 is the Acyl-thioester intermediate of the active site.

Belongs to the LipB family.

Its subcellular location is the cytoplasm. The enzyme catalyses octanoyl-[ACP] + L-lysyl-[protein] = N(6)-octanoyl-L-lysyl-[protein] + holo-[ACP] + H(+). Its pathway is protein modification; protein lipoylation via endogenous pathway; protein N(6)-(lipoyl)lysine from octanoyl-[acyl-carrier-protein]: step 1/2. Its function is as follows. Catalyzes the transfer of endogenously produced octanoic acid from octanoyl-acyl-carrier-protein onto the lipoyl domains of lipoate-dependent enzymes. Lipoyl-ACP can also act as a substrate although octanoyl-ACP is likely to be the physiological substrate. The protein is Octanoyltransferase of Haemophilus influenzae (strain PittGG).